The following is a 1482-amino-acid chain: Chromosome partition protein MukB (1482 aa).

Residue 34–41 (GGNGAGKS) coordinates ATP. Coiled-coil stretches lie at residues 337–418 (LNLV…QYQQ), 444–472 (LDTY…QTAH), 509–601 (RHLA…TSHA), 781–805 (AARE…ATLS), 835–1116 (EAEI…AKAG), and 1210–1265 (EAIE…LQSV). Residues 666–783 (PGGAEDARLN…SVPLFGRAAR (118 aa)) are flexible hinge. A disordered region spans residues 1049 to 1077 (ADAGAEERARQRRDELHTRLSNNRSRRNQ). The span at 1051-1066 (AGAEERARQRRDELHT) shows a compositional bias: basic and acidic residues.

This sequence belongs to the SMC family. MukB subfamily. In terms of assembly, homodimerization via its hinge domain. Binds to DNA via its C-terminal region. Interacts, and probably forms a ternary complex, with MukE and MukF via its C-terminal region. The complex formation is stimulated by calcium or magnesium. Interacts with tubulin-related protein FtsZ.

The protein resides in the cytoplasm. It is found in the nucleoid. Functionally, plays a central role in chromosome condensation, segregation and cell cycle progression. Functions as a homodimer, which is essential for chromosome partition. Involved in negative DNA supercoiling in vivo, and by this means organize and compact chromosomes. May achieve or facilitate chromosome segregation by condensation DNA from both sides of a centrally located replisome during cell division. This Cronobacter sakazakii (strain ATCC BAA-894) (Enterobacter sakazakii) protein is Chromosome partition protein MukB.